Consider the following 136-residue polypeptide: ATP synthase epsilon chain, plastid (136 aa).

Belongs to the ATPase epsilon chain family. F-type ATPases have 2 components, CF(1) - the catalytic core - and CF(0) - the membrane proton channel. CF(1) has five subunits: alpha(3), beta(3), gamma(1), delta(1), epsilon(1). CF(0) has three main subunits: a, b and c.

The protein localises to the plastid thylakoid membrane. Produces ATP from ADP in the presence of a proton gradient across the membrane. This is ATP synthase epsilon chain, plastid from Cuscuta reflexa (Southern Asian dodder).